The following is a 254-amino-acid chain: Trans-aconitate 2-methyltransferase (254 aa).

It belongs to the methyltransferase superfamily. Tam family.

The protein resides in the cytoplasm. The catalysed reaction is trans-aconitate + S-adenosyl-L-methionine = (E)-3-(methoxycarbonyl)pent-2-enedioate + S-adenosyl-L-homocysteine. Its function is as follows. Catalyzes the S-adenosylmethionine monomethyl esterification of trans-aconitate. The protein is Trans-aconitate 2-methyltransferase of Rhodococcus jostii (strain RHA1).